The primary structure comprises 385 residues: Transcription termination factor 2, mitochondrial (385 aa).

The transit peptide at methionine 1–tyrosine 35 directs the protein to the mitochondrion.

Belongs to the mTERF family. As to quaternary structure, monomer. In terms of tissue distribution, expressed in skeletal muscle, heart, liver and pancreas.

It is found in the mitochondrion. The protein resides in the mitochondrion matrix. The protein localises to the mitochondrion nucleoid. In terms of biological role, binds mitochondrial DNA and plays a role in the regulation of transcription of mitochondrial mRNA and rRNA species. The sequence is that of Transcription termination factor 2, mitochondrial (MTERF2) from Homo sapiens (Human).